The sequence spans 624 residues: Phragmoplastin DRP1E (624 aa).

At threonine 2 the chain carries N-acetylthreonine. The Dynamin-type G domain occupies 37–306; sequence WEALPTVAVV…LESVIRTRIP (270 aa). The interval 47-54 is G1 motif; the sequence is GGQSSGKS. 50–55 lines the GTP pocket; the sequence is SSGKSS. A G2 motif region spans residues 73 to 75; sequence VTR. The interval 148 to 151 is G3 motif; it reads DLPG. The G4 motif stretch occupies residues 217–220; that stretch reads TKLD. GTP-binding positions include 218 to 223 and 248 to 251; these read KLDLMD and NRSQ. Residues 247–250 are G5 motif; it reads VNRS. The 93-residue stretch at 532–624 folds into the GED domain; the sequence is FRRIASNVSA…DEIDAVAWVR (93 aa).

The protein belongs to the TRAFAC class dynamin-like GTPase superfamily. Dynamin/Fzo/YdjA family. In terms of assembly, forms homodimer and may homooligomerize and heterooligomerize to form the phragmoplastin complex. Binds to PHIP1. Ubiquitous.

The protein localises to the cytoplasm. It localises to the cytoskeleton. The protein resides in the phragmoplast. It carries out the reaction GTP + H2O = GDP + phosphate + H(+). In terms of biological role, microtubule-associated force-producing protein that is targeted to the tubulo-vesicular network of the forming cell plate during cytokinesis. Also plays a major role in plasma membrane maintenance and cell wall integrity with an implication in vesicular trafficking, polar cell expansion, and other aspects of plant growth and development. Has a GTPase activity. This Arabidopsis thaliana (Mouse-ear cress) protein is Phragmoplastin DRP1E.